Here is a 423-residue protein sequence, read N- to C-terminus: Flavohemoprotein B (423 aa).

One can recognise a Globin domain in the interval 1–136 (MLSQKSIQII…VAQAFMDAEE (136 aa)). H83 serves as a coordination point for heme b. Active-site charge relay system residues include Y93 and E135. Residues 149 to 423 (WKDTREFVVD…LRGVKNIIEN (275 aa)) are reductase. Residues 150–268 (KDTREFVVDR…SVPAGDFVVN (119 aa)) enclose the FAD-binding FR-type domain. FAD is bound by residues Y188 and 212 to 215 (RHYS). 281–286 (GVGINP) is a binding site for NADP(+). Residue 400-403 (LFGP) participates in FAD binding.

This sequence belongs to the globin family. Two-domain flavohemoproteins subfamily. The protein in the C-terminal section; belongs to the flavoprotein pyridine nucleotide cytochrome reductase family. The cofactor is FAD. It depends on heme b as a cofactor.

The protein localises to the cytoplasm. The catalysed reaction is 2 nitric oxide + NADPH + 2 O2 = 2 nitrate + NADP(+) + H(+). It carries out the reaction 2 nitric oxide + NADH + 2 O2 = 2 nitrate + NAD(+) + H(+). In terms of biological role, is involved in NO detoxification in an aerobic process, termed nitric oxide dioxygenase (NOD) reaction that utilizes O(2) and NAD(P)H to convert NO to nitrate, which protects the cell from various noxious nitrogen compounds. Therefore, plays a central role in the inducible response to nitrosative stress. Its function is as follows. In the presence of oxygen and NADH, it has NADH oxidase activity, which leads to the generation of superoxide and H(2)O(2). Under anaerobic conditions, it also exhibits nitric oxide reductase and FAD reductase activities. However, all these reactions are much lower than NOD activity. This Dictyostelium discoideum (Social amoeba) protein is Flavohemoprotein B (fhbB).